Reading from the N-terminus, the 101-residue chain is Large ribosomal subunit protein bL21 (101 aa).

The protein belongs to the bacterial ribosomal protein bL21 family. In terms of assembly, part of the 50S ribosomal subunit. Contacts protein L20.

In terms of biological role, this protein binds to 23S rRNA in the presence of protein L20. The polypeptide is Large ribosomal subunit protein bL21 (Anaeromyxobacter dehalogenans (strain 2CP-1 / ATCC BAA-258)).